A 638-amino-acid chain; its full sequence is 1-deoxy-D-xylulose-5-phosphate synthase (638 aa).

Thiamine diphosphate-binding positions include H79 and 120-122; that span reads AHS. D151 is a Mg(2+) binding site. Thiamine diphosphate is bound by residues 152–153, N180, Y289, and E371; that span reads GA. N180 serves as a coordination point for Mg(2+).

It belongs to the transketolase family. DXPS subfamily. Homodimer. The cofactor is Mg(2+). Requires thiamine diphosphate as cofactor.

The catalysed reaction is D-glyceraldehyde 3-phosphate + pyruvate + H(+) = 1-deoxy-D-xylulose 5-phosphate + CO2. Its pathway is metabolic intermediate biosynthesis; 1-deoxy-D-xylulose 5-phosphate biosynthesis; 1-deoxy-D-xylulose 5-phosphate from D-glyceraldehyde 3-phosphate and pyruvate: step 1/1. Functionally, catalyzes the acyloin condensation reaction between C atoms 2 and 3 of pyruvate and glyceraldehyde 3-phosphate to yield 1-deoxy-D-xylulose-5-phosphate (DXP). The polypeptide is 1-deoxy-D-xylulose-5-phosphate synthase (Rhizobium rhizogenes (strain K84 / ATCC BAA-868) (Agrobacterium radiobacter)).